A 114-amino-acid polypeptide reads, in one-letter code: MHELSVTQGLVDMLVEEAEKRKVKKVTKVTVVIGELTGIESESVKFYFDILTENTVAEGAELVFKIVRAQFKCTQCGNVFERSNFTFKCPVCGGQGVLIDKRGKEFYIESIEVE.

His2 serves as a coordination point for Ni(2+). Cys73, Cys76, Cys89, and Cys92 together coordinate Zn(2+).

Belongs to the HypA/HybF family.

Involved in the maturation of [NiFe] hydrogenases. Required for nickel insertion into the metal center of the hydrogenase. This is Hydrogenase maturation factor HypA from Caldanaerobacter subterraneus subsp. tengcongensis (strain DSM 15242 / JCM 11007 / NBRC 100824 / MB4) (Thermoanaerobacter tengcongensis).